The sequence spans 372 residues: Nickel transporter NicT (372 aa).

The next 8 membrane-spanning stretches (helical) occupy residues 30–50, 55–75, 104–124, 152–172, 218–238, 245–265, 294–314, and 335–355; these read LMFAVIVALHLVGWLTVTLLV, LSLGGKAFGIGVGLTAYTLGL, VGFFFSLGHSTVVFGLAVMLV, ISGAFLYLIGILNVIVLVGIV, VGFLFGLGFDTATEIALLVLA, GLPWYAILCLPVLFAAGMCLL, VTGLSVAVALLIGSVELLGLI, and TVGFVVVAMFALTWAIALLVW.

It belongs to the NiCoT transporter (TC 2.A.52) family.

It is found in the cell membrane. The catalysed reaction is Ni(2+)(in) = Ni(2+)(out). Export of the fluoroquinolone antibiotic norfloxacin is inhibited by the proton ionophore carbonyl cyanide m-chlorophenylhydrazone (CCCP). Nickel may influence the extrusion of antibiotics possibly by facilitating the proton motive force-dependent efflux process. Involved in nickel uptake. In addition, acts as a drug efflux pump and contributes to moderate tolerance towards different classes of antibiotics, including fluoroquinolones, aminoglycosides and the anti-TB drug isoniazid, with a preference for fluoroquinolones. The drug efflux function is probably dependent on proton motive force (pmf) or ion gradient, and might be facilitated by the presence of Ni(2+) ions. This chain is Nickel transporter NicT, found in Mycobacterium tuberculosis (strain ATCC 25618 / H37Rv).